Here is a 146-residue protein sequence, read N- to C-terminus: Hemoglobin subunit beta (146 aa).

The 145-residue stretch at 2–146 (HWSAEEKQLI…VAHALARKYH (145 aa)) folds into the Globin domain. Residues histidine 63 and histidine 92 each contribute to the heme b site.

The protein belongs to the globin family. Heterotetramer of two alpha chains and two beta chains. In terms of tissue distribution, red blood cells.

In terms of biological role, involved in oxygen transport from the lung to the various peripheral tissues. The polypeptide is Hemoglobin subunit beta (HBB) (Phasianus colchicus colchicus (Black-necked pheasant)).